We begin with the raw amino-acid sequence, 283 residues long: Bifunctional protein FolD 2 (283 aa).

NADP(+) contacts are provided by residues 165 to 167, Thr-192, and Val-233; that span reads GRG.

This sequence belongs to the tetrahydrofolate dehydrogenase/cyclohydrolase family. In terms of assembly, homodimer.

It catalyses the reaction (6R)-5,10-methylene-5,6,7,8-tetrahydrofolate + NADP(+) = (6R)-5,10-methenyltetrahydrofolate + NADPH. It carries out the reaction (6R)-5,10-methenyltetrahydrofolate + H2O = (6R)-10-formyltetrahydrofolate + H(+). Its pathway is one-carbon metabolism; tetrahydrofolate interconversion. Catalyzes the oxidation of 5,10-methylenetetrahydrofolate to 5,10-methenyltetrahydrofolate and then the hydrolysis of 5,10-methenyltetrahydrofolate to 10-formyltetrahydrofolate. In Saccharopolyspora erythraea (strain ATCC 11635 / DSM 40517 / JCM 4748 / NBRC 13426 / NCIMB 8594 / NRRL 2338), this protein is Bifunctional protein FolD 2.